The primary structure comprises 880 residues: Valine--tRNA ligase (880 aa).

Positions 51–61 (PNVTGELHLGH) match the 'HIGH' region motif. Residues 529–533 (KMSKT) carry the 'KMSKS' region motif. K532 lines the ATP pocket. Positions 815 to 854 (MSTMVDLEVEAKRVKAEISELEIQIERLSTRLSDEQFLAK) form a coiled coil.

Belongs to the class-I aminoacyl-tRNA synthetase family. ValS type 1 subfamily. In terms of assembly, monomer.

The protein resides in the cytoplasm. The enzyme catalyses tRNA(Val) + L-valine + ATP = L-valyl-tRNA(Val) + AMP + diphosphate. Functionally, catalyzes the attachment of valine to tRNA(Val). As ValRS can inadvertently accommodate and process structurally similar amino acids such as threonine, to avoid such errors, it has a 'posttransfer' editing activity that hydrolyzes mischarged Thr-tRNA(Val) in a tRNA-dependent manner. This is Valine--tRNA ligase from Dehalococcoides mccartyi (strain CBDB1).